A 423-amino-acid chain; its full sequence is UDP-N-acetylglucosamine 1-carboxyvinyltransferase 1 (423 aa).

Residue 23-24 participates in phosphoenolpyruvate binding; that stretch reads KN. Arginine 96 serves as a coordination point for UDP-N-acetyl-alpha-D-glucosamine. Residue cysteine 120 is the Proton donor of the active site. Cysteine 120 bears the 2-(S-cysteinyl)pyruvic acid O-phosphothioketal mark. UDP-N-acetyl-alpha-D-glucosamine contacts are provided by aspartate 309 and valine 331.

This sequence belongs to the EPSP synthase family. MurA subfamily.

It localises to the cytoplasm. It carries out the reaction phosphoenolpyruvate + UDP-N-acetyl-alpha-D-glucosamine = UDP-N-acetyl-3-O-(1-carboxyvinyl)-alpha-D-glucosamine + phosphate. It functions in the pathway cell wall biogenesis; peptidoglycan biosynthesis. In terms of biological role, cell wall formation. Adds enolpyruvyl to UDP-N-acetylglucosamine. The sequence is that of UDP-N-acetylglucosamine 1-carboxyvinyltransferase 1 from Streptococcus pyogenes serotype M3 (strain ATCC BAA-595 / MGAS315).